The sequence spans 279 residues: Toxin TxP-I (279 aa).

A signal peptide spans 1-14 (MNLFFLFIIPTILA). Positions 15 to 27 (VKPFRSFNNISLI) are excised as a propeptide.

Post-translationally, contains several disulfide bonds. As to expression, posterior glands which appear to be connected with the stylet through a series of ducts.

Its subcellular location is the secreted. Its function is as follows. Part of a complex mixture of neurotoxins which P.tritici utilizes to capture prey. It has contracting-paralyzing activity in insects. The polypeptide is Toxin TxP-I (Pyemotes tritici (Straw itch mite)).